The sequence spans 260 residues: UPF0246 protein APL_0602 (260 aa).

It belongs to the UPF0246 family.

The polypeptide is UPF0246 protein APL_0602 (Actinobacillus pleuropneumoniae serotype 5b (strain L20)).